Consider the following 190-residue polypeptide: Cypemycin cysteine dehydrogenase (decarboxylating) (190 aa).

It belongs to the HFCD (homooligomeric flavin containing Cys decarboxylase) superfamily.

The catalysed reaction is [cypemycin](1-18)-L-Cys-L-Leu-L-Val-L-Cys + A = C(3,19),S(21)-[cypemycin](1-18)-L-Ala-L-Leu-N-thioethenyl-L-valinamide + hydrogen sulfide + AH2 + CO2. Involved in the biosynthesis of the lanaridin cypemycin. In Streptomyces sp, this protein is Cypemycin cysteine dehydrogenase (decarboxylating).